The following is a 514-amino-acid chain: Maturase K (514 aa).

It belongs to the intron maturase 2 family. MatK subfamily.

The protein resides in the plastid. Its subcellular location is the chloroplast. In terms of biological role, usually encoded in the trnK tRNA gene intron. Probably assists in splicing its own and other chloroplast group II introns. The polypeptide is Maturase K (Acer palmatum (Japanese maple)).